The following is a 692-amino-acid chain: MEEKPGQPQPQHHHSHHHPHHHPQQQQQQQSHHHHHYYFYNHSHNHHHHHHHQQPHQYLQHGAEGSPKAQPKPLKHEQKHTLQQHQETPKKKTGYGEINGNAGEREISLKSLSSDEATNPISRVLNGNQQVVETSLKQTVKTSTFGKAGIKTKNFIQKNSMDKKNGKSYENKSGETQAVDKTDTIAIPNGVITSSSGYITNGYMSKGADNDGSGSESGYTTPKKRKARRNSAKGCENLNLVQDKIMQETSVPALKQGLETLKPDYSEQKGMRVDGSKPIWKYETGPGGTSRGKPAMGDVLRKSSDIKPGLSSKKFDDRPKGKHASAAASKEDSWTLFKPPPVFPVDNSSAKIVPKISYASKVKENLNKTVQNSSVSPSSSSSSSSTGETQTQSSSRLSQVPMSALKSVTSASFSNGPVLAGTDGSVYPSGGQPLLTTAANTLTPISTGTDSVLQDMSLASAAVEQIKSSLFIYPSNMQTVLLSAQVDLPSQTDQQNLGDIFQNQWGLSFINEPSAGPETVIGKSSDHKVMEVTFQGEYPATLVSQGAEIIPSGTEHPVFPKAYELEKRTSPQVLGHILKPGTTESGALSLDPSHIGDLQKADTSSQGALVFLSKDYEIENQNPLASPTNTLLGSAKEQRYQRGLERNDSWGSFDLRAAIVYHTKEMESIWNLQKQDPKRIITYNEAMDSPDQ.

Residues 1-100 (MEEKPGQPQP…KKTGYGEING (100 aa)) are disordered. Basic residues-rich tracts occupy residues 11–23 (QHHHSHHHPHHHP) and 31–54 (SHHHHHYYFYNHSHNHHHHHHHQQ). Lys-79 participates in a covalent cross-link: Glycyl lysine isopeptide (Lys-Gly) (interchain with G-Cter in SUMO2). Thr-88 carries the phosphothreonine modification. A Glycyl lysine isopeptide (Lys-Gly) (interchain with G-Cter in SUMO2) cross-link involves residue Lys-110. Phosphoserine occurs at positions 113 and 114. Residues Lys-137, Lys-147, Lys-158, and Lys-172 each participate in a glycyl lysine isopeptide (Lys-Gly) (interchain with G-Cter in SUMO2) cross-link. Residues 205 to 233 (SKGADNDGSGSESGYTTPKKRKARRNSAK) are disordered. Ser-213 and Ser-215 each carry phosphoserine. Phosphotyrosine is present on Tyr-219. Thr-220 and Thr-221 each carry phosphothreonine. Residues 222-231 (PKKRKARRNS) are compositionally biased toward basic residues. Glycyl lysine isopeptide (Lys-Gly) (interchain with G-Cter in SUMO2) cross-links involve residues Lys-262 and Lys-281. Disordered regions lie at residues 277-337 (KPIW…WTLF) and 369-401 (TVQNSSVSPSSSSSSSSTGETQTQSSSRLSQVP). Position 291 is an omega-N-methylarginine (Arg-291). Residue Lys-293 forms a Glycyl lysine isopeptide (Lys-Gly) (interchain with G-Cter in SUMO2) linkage. Position 304 is a phosphoserine (Ser-304). Residue Lys-307 forms a Glycyl lysine isopeptide (Lys-Gly) (interchain with G-Cter in SUMO2) linkage. Residues 371-395 (QNSSVSPSSSSSSSSTGETQTQSSS) are compositionally biased toward low complexity. A Phosphoserine modification is found at Ser-376. Thr-569 bears the Phosphothreonine mark. Ser-570, Ser-589, Ser-605, and Ser-626 each carry phosphoserine. Thr-630 is modified (phosphothreonine). 4 positions are modified to phosphoserine: Ser-634, Ser-649, Ser-652, and Ser-689.

In terms of assembly, interacts with FMR1 (via N-terminus). Interacts with DDX6.

It localises to the nucleus. It is found in the cytoplasm. The protein resides in the stress granule. Its function is as follows. Binds RNA. This chain is FMR1-interacting protein NUFIP2 (Nufip2), found in Mus musculus (Mouse).